Reading from the N-terminus, the 452-residue chain is UPF0210 protein Dred_1672 (452 aa).

This sequence belongs to the UPF0210 family. In terms of assembly, homodimer.

The polypeptide is UPF0210 protein Dred_1672 (Desulforamulus reducens (strain ATCC BAA-1160 / DSM 100696 / MI-1) (Desulfotomaculum reducens)).